Here is a 544-residue protein sequence, read N- to C-terminus: Serine/threonine-protein kinase bur1 (544 aa).

Residues F25 to F326 form the Protein kinase domain. ATP-binding positions include L31–V39 and K54. D155 functions as the Proton acceptor in the catalytic mechanism. A disordered region spans residues A357–R544. The span at G374–Q403 shows a compositional bias: polar residues. Basic and acidic residues-rich tracts occupy residues R419–G438, H456–Y466, D488–H511, and N532–R544.

The protein belongs to the protein kinase superfamily. CMGC Ser/Thr protein kinase family. CDC2/CDKX subfamily.

It localises to the nucleus. It catalyses the reaction L-seryl-[protein] + ATP = O-phospho-L-seryl-[protein] + ADP + H(+). It carries out the reaction L-threonyl-[protein] + ATP = O-phospho-L-threonyl-[protein] + ADP + H(+). The catalysed reaction is [DNA-directed RNA polymerase] + ATP = phospho-[DNA-directed RNA polymerase] + ADP + H(+). In terms of biological role, serine/threonine-protein kinase involved in transcription regulation. Phosphorylates the UBC2/RAD6 ubiquitin-conjugating enzyme (E2), leading to monoubiquitination of histone H2B and the silencing of telomeric-associated genes. Also required for histone H3 methylation. Necessary for the recovery from pheromone-induced growth arrest in the cell cycle G1 phase. The sequence is that of Serine/threonine-protein kinase bur1 (ptkA) from Emericella nidulans (strain FGSC A4 / ATCC 38163 / CBS 112.46 / NRRL 194 / M139) (Aspergillus nidulans).